A 597-amino-acid chain; its full sequence is CTP synthase (597 aa).

Residues Met-1–Leu-272 are amidoligase domain. Ser-18 is a binding site for CTP. UTP is bound at residue Ser-18. Residue Ser-19–Ile-24 participates in ATP binding. Tyr-59 lines the L-glutamine pocket. Asp-76 provides a ligand contact to ATP. The Mg(2+) site is built by Asp-76 and Glu-146. Residues Asp-153–Glu-155, Lys-193–Gln-198, and Lys-229 each bind CTP. Residues Lys-193–Gln-198 and Lys-229 each bind UTP. One can recognise a Glutamine amidotransferase type-1 domain in the interval Asn-299–Gly-543. Gly-363 is a binding site for L-glutamine. Catalysis depends on Cys-390, which acts as the Nucleophile; for glutamine hydrolysis. L-glutamine-binding positions include Leu-391–Gln-394, Glu-414, and Arg-471. Residues His-516 and Glu-518 contribute to the active site.

This sequence belongs to the CTP synthase family. Homotetramer.

The catalysed reaction is UTP + L-glutamine + ATP + H2O = CTP + L-glutamate + ADP + phosphate + 2 H(+). It carries out the reaction L-glutamine + H2O = L-glutamate + NH4(+). The enzyme catalyses UTP + NH4(+) + ATP = CTP + ADP + phosphate + 2 H(+). The protein operates within pyrimidine metabolism; CTP biosynthesis via de novo pathway; CTP from UDP: step 2/2. Its activity is regulated as follows. Allosterically activated by GTP, when glutamine is the substrate; GTP has no effect on the reaction when ammonia is the substrate. The allosteric effector GTP functions by stabilizing the protein conformation that binds the tetrahedral intermediate(s) formed during glutamine hydrolysis. Inhibited by the product CTP, via allosteric rather than competitive inhibition. In terms of biological role, catalyzes the ATP-dependent amination of UTP to CTP with either L-glutamine or ammonia as the source of nitrogen. Regulates intracellular CTP levels through interactions with the four ribonucleotide triphosphates. This chain is CTP synthase, found in Chlorobium luteolum (strain DSM 273 / BCRC 81028 / 2530) (Pelodictyon luteolum).